Reading from the N-terminus, the 146-residue chain is Small ribosomal subunit protein eS17 (146 aa).

The protein belongs to the eukaryotic ribosomal protein eS17 family. Component of the small ribosomal subunit (SSU). Mature N.crassa ribosomes consist of a small (40S) and a large (60S) subunit. The 40S small subunit contains 1 molecule of ribosomal RNA (18S rRNA) and at least 32 different proteins. The large 60S subunit contains 3 rRNA molecules (26S, 5.8S and 5S rRNA) and at least 42 different proteins.

Its subcellular location is the cytoplasm. In terms of biological role, component of the ribosome, a large ribonucleoprotein complex responsible for the synthesis of proteins in the cell. The small ribosomal subunit (SSU) binds messenger RNAs (mRNAs) and translates the encoded message by selecting cognate aminoacyl-transfer RNA (tRNA) molecules. The large subunit (LSU) contains the ribosomal catalytic site termed the peptidyl transferase center (PTC), which catalyzes the formation of peptide bonds, thereby polymerizing the amino acids delivered by tRNAs into a polypeptide chain. The nascent polypeptides leave the ribosome through a tunnel in the LSU and interact with protein factors that function in enzymatic processing, targeting, and the membrane insertion of nascent chains at the exit of the ribosomal tunnel. The polypeptide is Small ribosomal subunit protein eS17 (rps-17) (Neurospora crassa (strain ATCC 24698 / 74-OR23-1A / CBS 708.71 / DSM 1257 / FGSC 987)).